We begin with the raw amino-acid sequence, 98 residues long: U-megalopygitoxin(1)-Mo1 (98 aa).

Residues 1–17 form the signal peptide; it reads MYRETFVFCVLLAVVSA.

Belongs to the caterpillar 1 family. Post-translationally, contains 4 disulfide bonds. In terms of tissue distribution, expressed by the venom apparatus.

It is found in the secreted. Functionally, probable toxin. This Megalopyge opercularis (Southern flannel moth) protein is U-megalopygitoxin(1)-Mo1.